The sequence spans 333 residues: Protein XAP5 CIRCADIAN TIMEKEEPER (333 aa).

Coiled-coil stretches lie at residues 12-43 (AQDAVKIRRLEKQREAERRKIEELKNKSSDGQ) and 70-116 (TREQ…VRGD). Over residues 89–98 (EKEKLQKLQQ) the composition is skewed to basic and acidic residues. Residues 89 to 171 (EKEKLQKLQQ…REREAEEQAE (83 aa)) are disordered. A compositionally biased stretch (acidic residues) spans 123 to 136 (DEIENGSDEDEFEN). Positions 160 to 171 (PDREREAEEQAE) are enriched in basic and acidic residues.

This sequence belongs to the FAM50 family.

It localises to the nucleus. Involved in light regulation of the circadian clock and photomorphogenesis. The polypeptide is Protein XAP5 CIRCADIAN TIMEKEEPER (XCT) (Oryza sativa subsp. indica (Rice)).